We begin with the raw amino-acid sequence, 519 residues long: MNLLSLLLILLGIILGVVVGYIVARNLLHQKQVQARQTADDIVSYANKEADNIKKEKLLEAKEENQILKEQAENELRERRGELQRQETRLLQKEENLDRKSDLLDKKDEILEQKESKLEERQQQVDAKESSVQTLIMKHEQELERISGLTQEEAVKEQLQRVEEELSQDIAILVKEKEKEAKEKVDKTAKELLATTVQRLAAEHTTESTVSVVNLPNDEMKGRIIGREGRNIRTLETLTGIDLIIDDTPEAVILSGFDPIRREIARTALVNLVSDGRIHPGRIEDMVEKARKEVDDIIRDAGEQATFEINVHNMHPDLVKILGRLNYRTSYGQNVLKHSIEVAHLSGMLAAELGEDVTLAKRAGLLHDVGKAIDHEVEGSHVEIGVELAKKYNENNIIINAIHSHHGDVEPTSIISILVAAADALSAARPGARKETLENYIRRLERLETLSESYDGVEKAFAIQAGREIRVVVSPEEIDDLKSYRLARDIKNQIEEELQYPGHIKVTVVRETRAIEYAK.

The chain crosses the membrane as a helical span at residues 3 to 23; sequence LLSLLLILLGIILGVVVGYIV. The 61-residue stretch at 209–269 folds into the KH domain; that stretch reads TVSVVNLPND…IRREIARTAL (61 aa). An HD domain is found at 335–428; that stretch reads VLKHSIEVAH…VAAADALSAA (94 aa).

Belongs to the RNase Y family.

Its subcellular location is the cell membrane. Its function is as follows. Endoribonuclease that initiates mRNA decay. The polypeptide is Ribonuclease Y (Staphylococcus epidermidis (strain ATCC 35984 / DSM 28319 / BCRC 17069 / CCUG 31568 / BM 3577 / RP62A)).